A 143-amino-acid chain; its full sequence is Transcriptional regulator MraZ (143 aa).

2 SpoVT-AbrB domains span residues 5-47 and 76-119; these read EYQH…PQDE and AAEL…STEK.

Belongs to the MraZ family. As to quaternary structure, forms oligomers.

It is found in the cytoplasm. The protein localises to the nucleoid. This Syntrophomonas wolfei subsp. wolfei (strain DSM 2245B / Goettingen) protein is Transcriptional regulator MraZ.